The following is a 216-amino-acid chain: Peptide methionine sulfoxide reductase MsrA (216 aa).

The active site involves Cys-54.

This sequence belongs to the MsrA Met sulfoxide reductase family.

The enzyme catalyses L-methionyl-[protein] + [thioredoxin]-disulfide + H2O = L-methionyl-(S)-S-oxide-[protein] + [thioredoxin]-dithiol. It catalyses the reaction [thioredoxin]-disulfide + L-methionine + H2O = L-methionine (S)-S-oxide + [thioredoxin]-dithiol. Has an important function as a repair enzyme for proteins that have been inactivated by oxidation. Catalyzes the reversible oxidation-reduction of methionine sulfoxide in proteins to methionine. This Xanthomonas campestris pv. phaseoli protein is Peptide methionine sulfoxide reductase MsrA.